The following is a 498-amino-acid chain: Hexokinase-1 (498 aa).

A helical transmembrane segment spans residues 4–24 (VTVGAAVVGAAAVCAVAALIV). The 454-residue stretch at 35–488 (GRAMAILREF…SGIGAALLRA (454 aa)) folds into the Hexokinase domain. The tract at residues 89–228 (QLVMKLGVFY…VLDMRVSALV (140 aa)) is hexokinase small subdomain. The ADP site is built by Gly-104, Thr-105, and Asn-106. Residues Thr-194, Lys-195, Asn-229, and Asp-230 each contribute to the D-glucose site. The tract at residues 229–477 (NDTVGTLAGG…TSIVFVHSND (249 aa)) is hexokinase large subdomain. ADP is bound at residue Thr-253. D-glucose is bound by residues Asn-256, Glu-284, and Glu-315. Gly-442 is an ADP binding site.

Belongs to the hexokinase family. As to expression, expressed in young and mature leaves, stems, roots, stolons, and developing and mature tubers.

It localises to the plastid. It is found in the chloroplast outer membrane. It carries out the reaction a D-hexose + ATP = a D-hexose 6-phosphate + ADP + H(+). The catalysed reaction is D-fructose + ATP = D-fructose 6-phosphate + ADP + H(+). The enzyme catalyses D-glucose + ATP = D-glucose 6-phosphate + ADP + H(+). It participates in carbohydrate metabolism; hexose metabolism. Its pathway is carbohydrate degradation; glycolysis; D-glyceraldehyde 3-phosphate and glycerone phosphate from D-glucose: step 1/4. In terms of biological role, fructose and glucose phosphorylating enzyme. May be involved in the phosphorylation of glucose during the export from plastids to cytosol. Seems neither to be involved in cell sugar sensing nor in carbohydrate metabolism in tuber. The sequence is that of Hexokinase-1 (HXK1) from Solanum tuberosum (Potato).